The following is a 465-amino-acid chain: GTPase Der (465 aa).

EngA-type G domains lie at 3–166 (FLVA…LNEY) and 184–358 (IHFS…ACAS). Residues 9–16 (GRANVGKS), 56–60 (DTGGI), 118–121 (NKVD), 190–197 (GRPNVGKS), 237–241 (DTAGV), and 302–305 (NKWD) contribute to the GTP site. A KH-like domain is found at 359-443 (KKITTADATR…PIVFEFKQSE (85 aa)). The interval 446–465 (FADRKNKRSKDEGSKSKKVK) is disordered.

The protein belongs to the TRAFAC class TrmE-Era-EngA-EngB-Septin-like GTPase superfamily. EngA (Der) GTPase family. Associates with the 50S ribosomal subunit.

In terms of biological role, GTPase that plays an essential role in the late steps of ribosome biogenesis. The chain is GTPase Der from Francisella tularensis subsp. tularensis (strain FSC 198).